The sequence spans 336 residues: Glyceraldehyde-3-phosphate dehydrogenase (336 aa).

Residues 12 to 13 (RI), Asp34, Arg78, and Ser120 contribute to the NAD(+) site. D-glyceraldehyde 3-phosphate-binding positions include 151-153 (SCT) and Thr182. Catalysis depends on Cys152, which acts as the Nucleophile. Asn183 provides a ligand contact to NAD(+). D-glyceraldehyde 3-phosphate-binding positions include 211–212 (NG) and Arg234. Asn316 serves as a coordination point for NAD(+).

Belongs to the glyceraldehyde-3-phosphate dehydrogenase family. In terms of assembly, homotetramer.

Its subcellular location is the cytoplasm. The catalysed reaction is D-glyceraldehyde 3-phosphate + phosphate + NAD(+) = (2R)-3-phospho-glyceroyl phosphate + NADH + H(+). It functions in the pathway carbohydrate degradation; glycolysis; pyruvate from D-glyceraldehyde 3-phosphate: step 1/5. Its function is as follows. Catalyzes the oxidative phosphorylation of glyceraldehyde 3-phosphate (G3P) to 1,3-bisphosphoglycerate (BPG) using the cofactor NAD. The first reaction step involves the formation of a hemiacetal intermediate between G3P and a cysteine residue, and this hemiacetal intermediate is then oxidized to a thioester, with concomitant reduction of NAD to NADH. The reduced NADH is then exchanged with the second NAD, and the thioester is attacked by a nucleophilic inorganic phosphate to produce BPG. The chain is Glyceraldehyde-3-phosphate dehydrogenase (gap) from Heyndrickxia coagulans (Weizmannia coagulans).